The chain runs to 323 residues: Small ribosomal subunit protein mS35 (323 aa).

Residues 31 to 59 (PVPTPSLPERTPGNERPPRRKALPPRTEK) form a disordered region. A coiled-coil region spans residues 257–321 (SSERNILETL…YKESVKRLLN (65 aa)).

Belongs to the mitochondrion-specific ribosomal protein mS35 family. In terms of assembly, component of the mitochondrial small ribosomal subunit (mt-SSU). Mature mammalian 55S mitochondrial ribosomes consist of a small (28S) and a large (39S) subunit. The 28S small subunit contains a 12S ribosomal RNA (12S mt-rRNA) and 30 different proteins. The 39S large subunit contains a 16S rRNA (16S mt-rRNA), a copy of mitochondrial valine transfer RNA (mt-tRNA(Val)), which plays an integral structural role, and 52 different proteins.

It localises to the mitochondrion. This chain is Small ribosomal subunit protein mS35, found in Homo sapiens (Human).